A 433-amino-acid polypeptide reads, in one-letter code: Ascus wall endo-1,3-alpha-glucanase (433 aa).

Belongs to the glycosyl hydrolase 71 family.

Its subcellular location is the ascus epiplasm. The catalysed reaction is Endohydrolysis of (1-&gt;3)-alpha-D-glucosidic linkages in isolichenin, pseudonigeran and nigeran.. Functionally, promotes the release of ascospores from asci by hydrolyzing 1,3-alpha-glucan in the ascus wall. The chain is Ascus wall endo-1,3-alpha-glucanase from Schizosaccharomyces pombe (strain 972 / ATCC 24843) (Fission yeast).